Reading from the N-terminus, the 255-residue chain is MDIIPAIDILDGRCVRLYQGNYQLAETYGEDPVAVACNWAKLGAPRLHVVDLDGARQGMPVHLDALEAIVTQVPCPVQFGGGLRSIEAVSAVLDRGVDRVILGTAAVENPALIRECCERFGGRIAVGLDARGGQVAVRGWRETSEVEVTELAGEMEKLGVSAIVYTDILKDGTLTGPNLVELQRLTDAVKVPIIASGGVGTLADVLYLLALEPRGLQGVIIGRALYTGDVDLAEALRAAGPSRWQDLPPDDVAFA.

The active-site Proton acceptor is the Asp-8. Catalysis depends on Asp-129, which acts as the Proton donor.

Belongs to the HisA/HisF family.

The protein localises to the cytoplasm. The enzyme catalyses 1-(5-phospho-beta-D-ribosyl)-5-[(5-phospho-beta-D-ribosylamino)methylideneamino]imidazole-4-carboxamide = 5-[(5-phospho-1-deoxy-D-ribulos-1-ylimino)methylamino]-1-(5-phospho-beta-D-ribosyl)imidazole-4-carboxamide. Its pathway is amino-acid biosynthesis; L-histidine biosynthesis; L-histidine from 5-phospho-alpha-D-ribose 1-diphosphate: step 4/9. This is 1-(5-phosphoribosyl)-5-[(5-phosphoribosylamino)methylideneamino] imidazole-4-carboxamide isomerase from Gloeobacter violaceus (strain ATCC 29082 / PCC 7421).